We begin with the raw amino-acid sequence, 621 residues long: Phosphatidylinositol-3,5-bisphosphate 3-phosphatase MTMR6 (621 aa).

A GRAM domain is found at 1–101; the sequence is MEHIRTTKVE…YNSLLQLSKQ (101 aa). The interaction with RAB1B stretch occupies residues 2 to 141; the sequence is EHIRTTKVEQ…EEYKRMGVPN (140 aa). Position 108 is a phosphotyrosine (Y108). One can recognise a Myotubularin phosphatase domain in the interval 124–499; it reads GWQLIDLAEE…FNFKFWRNMY (376 aa). A 1,2-diacyl-sn-glycero-3-phospho-(1D-myo-inositol-3,5-bisphosphate)-binding residues include N248, N273, and I274. Residues N248, N273, and I274 each contribute to the a 1,2-diacyl-sn-glycero-3-phospho-(1D-myo-inositol-3-phosphate) site. The active-site Phosphocysteine intermediate is C336. Positions 337, 338, 339, 340, 341, 342, 378, and 382 each coordinate a 1,2-diacyl-sn-glycero-3-phospho-(1D-myo-inositol-3,5-bisphosphate). A 1,2-diacyl-sn-glycero-3-phospho-(1D-myo-inositol-3-phosphate) contacts are provided by S337, D338, G339, W340, D341, and R342. R382 serves as a coordination point for a 1,2-diacyl-sn-glycero-3-phospho-(1D-myo-inositol-3-phosphate). Phosphoserine is present on residues S556, S561, S589, and S611.

The protein belongs to the protein-tyrosine phosphatase family. Non-receptor class myotubularin subfamily. Homodimer. Heterodimer (via C-terminus) with MTMR9 (via C-terminus). Interacts with ALKBH4. Interacts with KCNN4. Interacts (via GRAM domain) with RAB1B (in GDP-bound form); the interaction regulates MTMR6 recruitment to the endoplasmic reticulum-Golgi intermediate compartment. Expressed in CD4+ T-cells.

It is found in the cytoplasm. Its subcellular location is the endoplasmic reticulum-Golgi intermediate compartment. It localises to the endoplasmic reticulum. The protein localises to the cell projection. The protein resides in the ruffle membrane. It is found in the perinuclear region. It catalyses the reaction a 1,2-diacyl-sn-glycero-3-phospho-(1D-myo-inositol-3,5-bisphosphate) + H2O = a 1,2-diacyl-sn-glycero-3-phospho-(1D-myo-inositol-5-phosphate) + phosphate. The catalysed reaction is a 1,2-diacyl-sn-glycero-3-phospho-(1D-myo-inositol-3-phosphate) + H2O = a 1,2-diacyl-sn-glycero-3-phospho-(1D-myo-inositol) + phosphate. It carries out the reaction 1,2-dioctanoyl-sn-glycero-3-phospho-(1D-myo-inositol-3,5-bisphosphate) + H2O = 1,2-dioctanoyl-sn-glycero-3-phospho-(1D-myo-inositol-5-phosphate) + phosphate. The enzyme catalyses 1,2-dioctanoyl-sn-glycero-3-phospho-(1-D-myo-inositol-3-phosphate) + H2O = 1,2-dioctanoyl-sn-glycero-3-phospho-(1D-myo-inositol) + phosphate. With respect to regulation, allosterically activated by phosphatidylserine and/or phosphatidylinositol 4-phosphate (PtdIns(4)P), and phosphatidylinositol 5-phosphate (PtdIns(5)P). Interaction with MTMR9 increases catalytic activity towards phosphatidylinositol 3,5-bisphosphate. Its function is as follows. Lipid phosphatase that specifically dephosphorylates the D-3 position of phosphatidylinositol 3-phosphate and phosphatidylinositol 3,5-bisphosphate, generating phosphatidylinositol and phosphatidylinositol 5-phosphate. Binds with high affinity to phosphatidylinositol 3,5-bisphosphate (PtdIns(3,5)P2) but also to phosphatidylinositol 3-phosphate (PtdIns(3)P), phosphatidylinositol 4-phosphate (PtdIns(4)P), and phosphatidylinositol 5-phosphate (PtdIns(5)P), phosphatidic acid and phosphatidylserine. Negatively regulates ER-Golgi protein transport. Probably in association with MTMR9, plays a role in the late stages of macropinocytosis by dephosphorylating phosphatidylinositol 3-phosphate in membrane ruffles. Acts as a negative regulator of KCNN4/KCa3.1 channel activity in CD4(+) T-cells possibly by decreasing intracellular levels of phosphatidylinositol 3-phosphate. Negatively regulates proliferation of reactivated CD4(+) T-cells. In complex with MTMR9, negatively regulates DNA damage-induced apoptosis. The formation of the MTMR6-MTMR9 complex stabilizes both MTMR6 and MTMR9 protein levels. The protein is Phosphatidylinositol-3,5-bisphosphate 3-phosphatase MTMR6 of Homo sapiens (Human).